The sequence spans 61 residues: Large ribosomal subunit protein uL30 (61 aa).

The protein belongs to the universal ribosomal protein uL30 family. Part of the 50S ribosomal subunit.

The sequence is that of Large ribosomal subunit protein uL30 from Caulobacter vibrioides (strain ATCC 19089 / CIP 103742 / CB 15) (Caulobacter crescentus).